A 901-amino-acid polypeptide reads, in one-letter code: Dipeptidyl-aminopeptidase B (901 aa).

Low complexity predominate over residues 1 to 22; the sequence is MSSPRPSTSSTSSDSGLSVDTT. The disordered stretch occupies residues 1–67; it reads MSSPRPSTSS…EPFLPSAKKQ (67 aa). The Cytoplasmic segment spans residues 1–76; the sequence is MSSPRPSTSS…QAASGSRTSR (76 aa). The chain crosses the membrane as a helical; Signal-anchor for type II membrane protein span at residues 77 to 97; that stretch reads LIWGLVILCVAGWLWGLVLFV. Over 98–901 the chain is Vacuolar; sequence TQNRSAQQSV…VKRSLPMLVN (804 aa). N-linked (GlcNAc...) asparagine glycans are attached at residues N334 and N625. S739 (charge relay system) is an active-site residue. A glycan (N-linked (GlcNAc...) asparagine) is linked at N793. Residues D816 and H849 each act as charge relay system in the active site.

It belongs to the peptidase S9B family.

The protein localises to the vacuole membrane. It carries out the reaction Release of an N-terminal dipeptide, Xaa-Yaa-|-Zaa-, from a polypeptide, preferentially when Yaa is Pro, provided Zaa is neither Pro nor hydroxyproline.. Its function is as follows. Type IV dipeptidyl-peptidase which removes N-terminal dipeptides sequentially from polypeptides having unsubstituted N-termini provided that the penultimate residue is proline. The chain is Dipeptidyl-aminopeptidase B (dapB) from Aspergillus niger.